The primary structure comprises 228 residues: Latherin (228 aa).

The signal sequence occupies residues 1–20; the sequence is MLKVSCLFVLLCGLLVPSSA. Cysteine 153 and cysteine 196 are joined by a disulfide.

It belongs to the BPI/LBP/Plunc superfamily. Plunc family. Monomer. In terms of processing, no sign of N-X-[ST] acceptor site even though reported as N-glycosylated. Found in sweat (at protein level).

Its subcellular location is the secreted. In terms of biological role, major protein in sweat, has surfactant properties. Has a role in temperature regulation by having a capacity to make hydrophobic surfaces wettable and so can function in promoting spreading and evaporation of sweat. This Equus caballus (Horse) protein is Latherin (LATH).